The sequence spans 356 residues: Delta(7)-sterol 5(6)-desaturase (356 aa).

The next 3 membrane-spanning stretches (helical) occupy residues 87-107, 134-154, and 171-191; these read LTLY…FAGL, QANI…LAEV, and WYDY…IYWI. One can recognise a Fatty acid hydroxylase domain in the interval 179–303; it reads FFIAFTDLCI…FTTLWDRLGG (125 aa). Residues 192–196 carry the Histidine box-1 motif; sequence HRGLH. The Histidine box-2 signature appears at 205 to 209; sequence HKPHH. The helical transmembrane segment at 235–255 threads the bilayer; that stretch reads YIFPFLFPLSKIASVAFFVFV. A Histidine box-3 motif is present at residues 280 to 284; that stretch reads HTMHH.

The protein belongs to the sterol desaturase family. Fe cation serves as cofactor.

It localises to the endoplasmic reticulum membrane. The catalysed reaction is a Delta(7)-sterol + 2 Fe(II)-[cytochrome b5] + O2 + 2 H(+) = a Delta(5),Delta(7)-sterol + 2 Fe(III)-[cytochrome b5] + 2 H2O. Its pathway is steroid metabolism; ergosterol biosynthesis; ergosterol from zymosterol: step 3/5. Catalyzes the introduction of a C-5 double bond in the B ring of ergosterol. May contribute to the regulation of ergosterol biosynthesis. The polypeptide is Delta(7)-sterol 5(6)-desaturase (ERG3) (Leptosphaeria maculans (Blackleg fungus)).